We begin with the raw amino-acid sequence, 163 residues long: I-Kappa-B like protein N3 (163 aa).

ANK repeat units lie at residues 62-95 and 100-130; these read LGDT…NLNT and NGDT…NLQT.

The protein belongs to the polydnaviridae I-Kappa-B like protein family.

Suppresses the host immune response through NF-kappa-B inactivation. Possesses ankyrin repeat domains required for NF-kappa-B binding but lacks the regulatory regions required for dissociation from NF-kappa-B and degradation. Therefore, prevents host NF-kappa-B release and subsequent activation. This Microplitis demolitor (Parasitoid wasp) protein is I-Kappa-B like protein N3 (N6).